The sequence spans 217 residues: 3,4-dihydroxy-2-butanone 4-phosphate synthase (217 aa).

D-ribulose 5-phosphate-binding positions include 37-38, Asp42, 150-154, and Glu174; these read RE and RGGHT. Residue Glu38 coordinates Mg(2+). Residue His153 coordinates Mg(2+).

It belongs to the DHBP synthase family. Homodimer. Mg(2+) serves as cofactor. The cofactor is Mn(2+).

The enzyme catalyses D-ribulose 5-phosphate = (2S)-2-hydroxy-3-oxobutyl phosphate + formate + H(+). Its pathway is cofactor biosynthesis; riboflavin biosynthesis; 2-hydroxy-3-oxobutyl phosphate from D-ribulose 5-phosphate: step 1/1. Functionally, catalyzes the conversion of D-ribulose 5-phosphate to formate and 3,4-dihydroxy-2-butanone 4-phosphate. In Klebsiella pneumoniae (strain 342), this protein is 3,4-dihydroxy-2-butanone 4-phosphate synthase.